Consider the following 100-residue polypeptide: Large ribosomal subunit protein uL23 (100 aa).

This sequence belongs to the universal ribosomal protein uL23 family. As to quaternary structure, part of the 50S ribosomal subunit. Contacts protein L29, and trigger factor when it is bound to the ribosome.

One of the early assembly proteins it binds 23S rRNA. One of the proteins that surrounds the polypeptide exit tunnel on the outside of the ribosome. Forms the main docking site for trigger factor binding to the ribosome. The polypeptide is Large ribosomal subunit protein uL23 (Mycobacterium leprae (strain Br4923)).